A 282-amino-acid polypeptide reads, in one-letter code: Cuticle collagen 8 (282 aa).

A signal peptide spans 1-24 (MLVCVFVALYTMMGLLTDIKQLQS). A disordered region spans residues 86-282 (GPKSEGCPAG…CPCPGRSYKA (197 aa)). Triple-helical region regions lie at residues 95–124 (GPPG…PGVI) and 141–269 (GRPG…PGPD). The segment covering 170–180 (TGGQGGPGEQG) has biased composition (gly residues). A compositionally biased stretch (pro residues) spans 214 to 224 (PPGPRGPPGPE). A compositionally biased stretch (gly residues) spans 225 to 234 (GNPGGAGEDG). The segment covering 235–244 (NQGPVGHPGV) has biased composition (low complexity).

The protein belongs to the cuticular collagen family. As to quaternary structure, collagen polypeptide chains are complexed within the cuticle by disulfide bonds and other types of covalent cross-links.

Its function is as follows. Nematode cuticles are composed largely of collagen-like proteins. The cuticle functions both as an exoskeleton and as a barrier to protect the worm from its environment. In Caenorhabditis elegans, this protein is Cuticle collagen 8 (col-8).